We begin with the raw amino-acid sequence, 365 residues long: tRNA-specific 2-thiouridylase MnmA (365 aa).

ATP is bound by residues 14-21 (AMSGGVDS) and Leu40. Cys108 (nucleophile) is an active-site residue. Cys108 and Cys204 are disulfide-bonded. Gly132 serves as a coordination point for ATP. An interaction with tRNA region spans residues 154 to 156 (KDQ). The active-site Cysteine persulfide intermediate is the Cys204.

This sequence belongs to the MnmA/TRMU family.

The protein resides in the cytoplasm. It catalyses the reaction S-sulfanyl-L-cysteinyl-[protein] + uridine(34) in tRNA + AH2 + ATP = 2-thiouridine(34) in tRNA + L-cysteinyl-[protein] + A + AMP + diphosphate + H(+). Catalyzes the 2-thiolation of uridine at the wobble position (U34) of tRNA, leading to the formation of s(2)U34. This Rickettsia rickettsii (strain Iowa) protein is tRNA-specific 2-thiouridylase MnmA.